The following is a 940-amino-acid chain: Receptor-like protein 9b (940 aa).

An N-terminal signal peptide occupies residues 1-28 (MLMMFSPAFVMVMDLMVLVMMIMMMVSS). At 29–895 (LDAHGHISCI…GDEETTIDME (867 aa)) the chain is on the extracellular side. N-linked (GlcNAc...) asparagine glycosylation is found at Asn-53, Asn-63, Asn-66, Asn-101, Asn-115, and Asn-151. 16 LRR repeats span residues 108-136 (FGEL…SFER), 137-163 (LKNL…TASS), 165-185 (KTLI…ELIN), 186-211 (LRNL…NFHN), 213-232 (QGLD…LCQL), 233-255 (KNLR…CFDS), 257-279 (TQLQ…LIRN), 281-304 (DSVE…LIAN), 306-330 (SKLK…SLQP), 331-354 (KFQL…IQHQ), 355-378 (KDLH…LLEK), 379-402 (YPNL…RLLN), 403-426 (HTLQ…IGKV), 427-450 (LPNI…SFGE), 452-475 (KDIK…FLIG), and 477-502 (SSLH…NFGS). 2 N-linked (GlcNAc...) asparagine glycosylation sites follow: Asn-270 and Asn-304. 3 N-linked (GlcNAc...) asparagine glycosylation sites follow: Asn-361, Asn-389, and Asn-402. 2 N-linked (GlcNAc...) asparagine glycosylation sites follow: Asn-434 and Asn-463. One copy of the LRR 17; degenerate repeat lies at 503–522 (LVVLIANNNLFTGIADGLRN). LRR repeat units lie at residues 523–546 (VQSL…WFGG), 547–570 (FFFA…LFSK), 571–593 (PTFK…HFTG), 595–615 (DMSL…STLI), 616–639 (KDVL…VKNE), 641–662 (ILSL…LCGL), 663–686 (RSIR…LNNV), 752–776 (FNFM…LGDL), 777–799 (QRIR…SFSN), 801–824 (TDIE…LSKL), and 826–849 (YMVV…KFST). Asn-685 carries N-linked (GlcNAc...) asparagine glycosylation. N-linked (GlcNAc...) asparagine glycans are attached at residues Asn-783 and Asn-799. Residues Asn-831, Asn-836, Asn-867, and Asn-873 are each glycosylated (N-linked (GlcNAc...) asparagine). The helical transmembrane segment at 896 to 916 (IFYWSLAATYGVTWITFIVFL) threads the bilayer. Residues 917-940 (CFDSPWRRVWFHFVDAFISLFKCV) lie on the Cytoplasmic side of the membrane.

This sequence belongs to the RLP family.

Its subcellular location is the cell membrane. The polypeptide is Receptor-like protein 9b (Arabidopsis thaliana (Mouse-ear cress)).